The following is a 148-amino-acid chain: UPF0756 membrane protein YeaL (148 aa).

The next 4 membrane-spanning stretches (helical) occupy residues 14–34 (ALGFISHNTTVAVSILVLIIV), 51–71 (LSIGIIILTIGVMAPIASGTL), 86–106 (LVAIAVGVIVSWLGGRGVTLM), and 121–141 (VLGVALFRGVPVGPLIAAGLV).

Belongs to the UPF0756 family.

Its subcellular location is the cell membrane. The polypeptide is UPF0756 membrane protein YeaL (Shigella boydii serotype 18 (strain CDC 3083-94 / BS512)).